The sequence spans 170 residues: Transcriptional repressor NrdR (170 aa).

A zinc finger spans residues 3-34; it reads CPFCRHPDSRVVDSRTSEDGSSIRRRRQCPEC. The ATP-cone domain occupies 46-136; that stretch reads LSVVKRSGVA…VYRGFSSLED (91 aa). A disordered region spans residues 148 to 170; that stretch reads RENEGDPDADGSADAPVRLTTSV.

The protein belongs to the NrdR family. Requires Zn(2+) as cofactor.

In terms of biological role, negatively regulates transcription of bacterial ribonucleotide reductase nrd genes and operons by binding to NrdR-boxes. In Beutenbergia cavernae (strain ATCC BAA-8 / DSM 12333 / CCUG 43141 / JCM 11478 / NBRC 16432 / NCIMB 13614 / HKI 0122), this protein is Transcriptional repressor NrdR.